The primary structure comprises 710 residues: Ribonuclease R (710 aa).

An RNB domain is found at 246–573 (RKDLRDKVIV…VHRLLKLYLE (328 aa)). Residues 625 to 705 (GEVFNVVVTN…IRGEIDFVLV (81 aa)) form the S1 motif domain.

It belongs to the RNR ribonuclease family. RNase R subfamily.

It localises to the cytoplasm. The enzyme catalyses Exonucleolytic cleavage in the 3'- to 5'-direction to yield nucleoside 5'-phosphates.. Functionally, 3'-5' exoribonuclease that releases 5'-nucleoside monophosphates and is involved in maturation of structured RNAs. In Thermotoga maritima (strain ATCC 43589 / DSM 3109 / JCM 10099 / NBRC 100826 / MSB8), this protein is Ribonuclease R.